The sequence spans 159 residues: MNISIISVGKLKEKYLKQGIAEYTKRLGAYAKIELIEVPDEKAPEQLSDTEMEHVKQKEGERILAKLHPDTYVIALAIEGSMKSSEELADTMDRLATYGKSKVAFVIGGSLGLSDAVLKRADEKLSFSKMTFPHRLMRLILLEQVYRAFRINRGEPYHK.

S-adenosyl-L-methionine is bound by residues Leu76, Gly108, and 127 to 132; that span reads FSKMTF.

It belongs to the RNA methyltransferase RlmH family. Homodimer.

It is found in the cytoplasm. The catalysed reaction is pseudouridine(1915) in 23S rRNA + S-adenosyl-L-methionine = N(3)-methylpseudouridine(1915) in 23S rRNA + S-adenosyl-L-homocysteine + H(+). Its function is as follows. Specifically methylates the pseudouridine at position 1915 (m3Psi1915) in 23S rRNA. This chain is Ribosomal RNA large subunit methyltransferase H, found in Halalkalibacterium halodurans (strain ATCC BAA-125 / DSM 18197 / FERM 7344 / JCM 9153 / C-125) (Bacillus halodurans).